We begin with the raw amino-acid sequence, 65 residues long: Small ribosomal subunit protein bS21 (65 aa).

Belongs to the bacterial ribosomal protein bS21 family.

The chain is Small ribosomal subunit protein bS21 from Thermodesulfovibrio yellowstonii (strain ATCC 51303 / DSM 11347 / YP87).